The following is a 383-amino-acid chain: Queuine tRNA-ribosyltransferase (383 aa).

Asp-92 (proton acceptor) is an active-site residue. Substrate is bound by residues 92–96, Asp-146, Gln-190, and Gly-217; that span reads DSGGF. Residues 248-254 form an RNA binding region; sequence GVGKPED. Catalysis depends on Asp-267, which acts as the Nucleophile. The tract at residues 272–276 is RNA binding; important for wobble base 34 recognition; sequence TRNAR. Residues Cys-310, Cys-312, Cys-315, and His-341 each contribute to the Zn(2+) site.

This sequence belongs to the queuine tRNA-ribosyltransferase family. In terms of assembly, homodimer. Within each dimer, one monomer is responsible for RNA recognition and catalysis, while the other monomer binds to the replacement base PreQ1. The cofactor is Zn(2+).

It catalyses the reaction 7-aminomethyl-7-carbaguanine + guanosine(34) in tRNA = 7-aminomethyl-7-carbaguanosine(34) in tRNA + guanine. It participates in tRNA modification; tRNA-queuosine biosynthesis. Its function is as follows. Catalyzes the base-exchange of a guanine (G) residue with the queuine precursor 7-aminomethyl-7-deazaguanine (PreQ1) at position 34 (anticodon wobble position) in tRNAs with GU(N) anticodons (tRNA-Asp, -Asn, -His and -Tyr). Catalysis occurs through a double-displacement mechanism. The nucleophile active site attacks the C1' of nucleotide 34 to detach the guanine base from the RNA, forming a covalent enzyme-RNA intermediate. The proton acceptor active site deprotonates the incoming PreQ1, allowing a nucleophilic attack on the C1' of the ribose to form the product. After dissociation, two additional enzymatic reactions on the tRNA convert PreQ1 to queuine (Q), resulting in the hypermodified nucleoside queuosine (7-(((4,5-cis-dihydroxy-2-cyclopenten-1-yl)amino)methyl)-7-deazaguanosine). This chain is Queuine tRNA-ribosyltransferase, found in Psychrobacter cryohalolentis (strain ATCC BAA-1226 / DSM 17306 / VKM B-2378 / K5).